The sequence spans 426 residues: tRNA methyltransferase 10 homolog C (426 aa).

The N-terminal 41 residues, 1–41 (MPVLLKMSVSITFLRPFARVLVPFTLHRKRRVLYSTIMQRY), are a transit peptide targeting the mitochondrion. A Phosphoserine modification is found at Ser-86. Residues 138–166 (LYIKEKMKKARQIKKEMKKAEKEEPKKDQ) adopt a coiled-coil conformation. In terms of domain architecture, SAM-dependent MTase TRM10-type spans 193–385 (MGWKGAQAMQ…KFVPSRKHAG (193 aa)).

It belongs to the class IV-like SAM-binding methyltransferase superfamily. TRM10 family. In terms of assembly, component of mitochondrial ribonuclease P, a complex composed of TRMT10C/MRPP1, HSD17B10/MRPP2 and PRORP/MRPP3. Interacts with HSD17B10/MRPP2; forming the MRPP1-MRPP2 subcomplex of the mitochondrial ribonuclease P complex. Interacts with GRSF1.

It localises to the mitochondrion matrix. The protein resides in the mitochondrion nucleoid. It catalyses the reaction adenosine(9) in tRNA + S-adenosyl-L-methionine = N(1)-methyladenosine(9) in tRNA + S-adenosyl-L-homocysteine + H(+). The catalysed reaction is guanosine(9) in tRNA + S-adenosyl-L-methionine = N(1)-methylguanosine(9) in tRNA + S-adenosyl-L-homocysteine + H(+). It carries out the reaction an adenosine in mRNA + S-adenosyl-L-methionine = an N(1)-methyladenosine in mRNA + S-adenosyl-L-homocysteine + H(+). Mitochondrial tRNA N(1)-methyltransferase involved in mitochondrial tRNA maturation. Component of mitochondrial ribonuclease P, a complex composed of TRMT10C/MRPP1, HSD17B10/MRPP2 and PRORP/MRPP3, which cleaves tRNA molecules in their 5'-ends. Together with HSD17B10/MRPP2, forms a subcomplex of the mitochondrial ribonuclease P, named MRPP1-MRPP2 subcomplex, which displays functions that are independent of the ribonuclease P activity. The MRPP1-MRPP2 subcomplex catalyzes the formation of N(1)-methylguanine and N(1)-methyladenine at position 9 (m1G9 and m1A9, respectively) in tRNAs; TRMT10C/MRPP1 acting as the catalytic N(1)-methyltransferase subunit. The MRPP1-MRPP2 subcomplex also acts as a tRNA maturation platform: following 5'-end cleavage by the mitochondrial ribonuclease P complex, the MRPP1-MRPP2 subcomplex enhances the efficiency of 3'-processing catalyzed by ELAC2, retains the tRNA product after ELAC2 processing and presents the nascent tRNA to the mitochondrial CCA tRNA nucleotidyltransferase TRNT1 enzyme. In addition to tRNA N(1)-methyltransferase activity, TRMT10C/MRPP1 also acts as a mRNA N(1)-methyltransferase by mediating methylation of adenosine residues at the N(1) position of MT-ND5 mRNA. Associates with mitochondrial DNA complexes at the nucleoids to initiate RNA processing and ribosome assembly. This chain is tRNA methyltransferase 10 homolog C, found in Bos taurus (Bovine).